A 488-amino-acid chain; its full sequence is Probable cytochrome P450 6u1 (488 aa).

C430 is a binding site for heme.

The protein belongs to the cytochrome P450 family. Requires heme as cofactor.

The protein localises to the endoplasmic reticulum membrane. It is found in the microsome membrane. Functionally, may be involved in the metabolism of insect hormones and in the breakdown of synthetic insecticides. This Drosophila melanogaster (Fruit fly) protein is Probable cytochrome P450 6u1 (Cyp6u1).